The following is a 122-amino-acid chain: Small ribosomal subunit protein uS13 (122 aa).

Over residues 95–116 the composition is skewed to basic residues; sequence GLPVRGQKTKTNARTRKGRRKT. The disordered stretch occupies residues 95-122; that stretch reads GLPVRGQKTKTNARTRKGRRKTVGAATK.

It belongs to the universal ribosomal protein uS13 family. As to quaternary structure, part of the 30S ribosomal subunit. Forms a loose heterodimer with protein S19. Forms two bridges to the 50S subunit in the 70S ribosome.

Its function is as follows. Located at the top of the head of the 30S subunit, it contacts several helices of the 16S rRNA. In the 70S ribosome it contacts the 23S rRNA (bridge B1a) and protein L5 of the 50S subunit (bridge B1b), connecting the 2 subunits; these bridges are implicated in subunit movement. Contacts the tRNAs in the A and P-sites. The polypeptide is Small ribosomal subunit protein uS13 (Campylobacter concisus (strain 13826)).